The primary structure comprises 587 residues: Ankyrin repeat and SOCS box protein 14 (587 aa).

11 ANK repeats span residues Asn81–Trp110, Asn116–Ala145, Glu149–Leu178, Asn182–Ala211, Tyr215–Ser244, Asp248–Ile277, Ser281–Ile310, Ser313–Phe342, Gln355–Gln384, Asp385–Tyr414, and Cys416–Arg449. Residues Trp521–Asp576 enclose the SOCS box domain.

Belongs to the ankyrin SOCS box (ASB) family. In terms of assembly, interacts with MAPRE2; this interaction promotes MAPRE2 degradation.

The protein operates within protein modification; protein ubiquitination. May be a substrate-recognition component of a SCF-like ECS (Elongin-Cullin-SOCS-box protein) E3 ubiquitin-protein ligase complex which mediates the ubiquitination and subsequent proteasomal degradation of target proteins. Plays a role in the inhibition of cardiomyocyte nuclear proliferation by mediating the ubiquitination and degradation of MAPRE2. In Mus musculus (Mouse), this protein is Ankyrin repeat and SOCS box protein 14 (Asb14).